The following is a 203-amino-acid chain: Endo-type membrane-bound lytic murein transglycosylase A (203 aa).

The signal sequence occupies residues 1–15 (MKLRWFAFLVVLLAG). The N-palmitoyl cysteine moiety is linked to residue Cys-16. Cys-16 carries S-diacylglycerol cysteine lipidation.

The protein belongs to the transglycosylase Slt family.

It localises to the cell outer membrane. The enzyme catalyses Endolytic cleavage of the (1-&gt;4)-beta-glycosidic linkage between N-acetylmuramic acid (MurNAc) and N-acetylglucosamine (GlcNAc) residues in peptidoglycan with concomitant formation of a 1,6-anhydrobond in the MurNAc residue.. Murein-degrading enzyme. May play a role in recycling of muropeptides during cell elongation and/or cell division. Preferentially cleaves at a distance of more than two disaccharide units from the ends of the glycan chain. This is Endo-type membrane-bound lytic murein transglycosylase A from Citrobacter koseri (strain ATCC BAA-895 / CDC 4225-83 / SGSC4696).